Reading from the N-terminus, the 66-residue chain is MSQSNYRPSVPRWVGDILELDKKRRQNQYRGSLTSGQEKKDWDEWKRRYSRKLKYARLNGWTIEEE.

The chain is SPbeta prophage-derived uncharacterized protein YosK (yosK) from Bacillus subtilis (strain 168).